The primary structure comprises 448 residues: Serine--tRNA ligase (448 aa).

255–257 (TSE) lines the L-serine pocket. Residue 286-288 (RSE) participates in ATP binding. Position 309 (glutamate 309) interacts with L-serine. 373–376 (EISS) contributes to the ATP binding site. Position 408 (serine 408) interacts with L-serine.

This sequence belongs to the class-II aminoacyl-tRNA synthetase family. Type-1 seryl-tRNA synthetase subfamily. As to quaternary structure, homodimer. The tRNA molecule binds across the dimer.

It localises to the cytoplasm. It carries out the reaction tRNA(Ser) + L-serine + ATP = L-seryl-tRNA(Ser) + AMP + diphosphate + H(+). The enzyme catalyses tRNA(Sec) + L-serine + ATP = L-seryl-tRNA(Sec) + AMP + diphosphate + H(+). The protein operates within aminoacyl-tRNA biosynthesis; selenocysteinyl-tRNA(Sec) biosynthesis; L-seryl-tRNA(Sec) from L-serine and tRNA(Sec): step 1/1. In terms of biological role, catalyzes the attachment of serine to tRNA(Ser). Is also able to aminoacylate tRNA(Sec) with serine, to form the misacylated tRNA L-seryl-tRNA(Sec), which will be further converted into selenocysteinyl-tRNA(Sec). The sequence is that of Serine--tRNA ligase from Bordetella petrii (strain ATCC BAA-461 / DSM 12804 / CCUG 43448).